Here is a 515-residue protein sequence, read N- to C-terminus: Protein pid-4 (515 aa).

The interval 496 to 515 is disordered; sequence DRSPQKFKFPASGSYMKPAN.

As to quaternary structure, may interact with pid-2, app-1 and prmt-5.

It localises to the cytoplasm. The protein resides in the perinuclear region. It is found in the P-body. Functionally, together with pid-5, it is involved in gene silencing mediated by a class of 21 nucleotide PIWI-interacting RNAs (piRNAs) that possess a uracil residue at the 5'-end (also called 21U-RNAs) and guide the Piwi protein prg-1 to its DNA targets for silencing. Together with pid-5, it is required for the biogenesis of secondary and tertiary 22G-siRNAs. Specifically, promotes the production of 22G-siRNAs from the 5' end of target mRNAs. Together with pid-5, plays a role in small RNA-directed transgenerational epigenetic inheritance (also called RNAe) over several generations and germline immortality. Together with pid-5, plays a role in the formation of liquid-like condensates in the cytoplasm called Z granules. In Caenorhabditis elegans, this protein is Protein pid-4.